The sequence spans 293 residues: Ethanolamine ammonia-lyase small subunit (293 aa).

2 residues coordinate adenosylcob(III)alamin: V207 and E228.

The protein belongs to the EutC family. The basic unit is a heterodimer which dimerizes to form tetramers. The heterotetramers trimerize; 6 large subunits form a core ring with 6 small subunits projecting outwards. Requires adenosylcob(III)alamin as cofactor.

The protein resides in the bacterial microcompartment. It carries out the reaction ethanolamine = acetaldehyde + NH4(+). It functions in the pathway amine and polyamine degradation; ethanolamine degradation. Its function is as follows. Catalyzes the deamination of various vicinal amino-alcohols to oxo compounds. Allows this organism to utilize ethanolamine as the sole source of nitrogen and carbon in the presence of external vitamin B12. The sequence is that of Ethanolamine ammonia-lyase small subunit from Listeria monocytogenes serotype 4a (strain HCC23).